The sequence spans 296 residues: Homoserine kinase (296 aa).

84–94 (PLARGLGSSSS) lines the ATP pocket.

The protein belongs to the GHMP kinase family. Homoserine kinase subfamily.

The protein resides in the cytoplasm. It carries out the reaction L-homoserine + ATP = O-phospho-L-homoserine + ADP + H(+). It functions in the pathway amino-acid biosynthesis; L-threonine biosynthesis; L-threonine from L-aspartate: step 4/5. Its function is as follows. Catalyzes the ATP-dependent phosphorylation of L-homoserine to L-homoserine phosphate. This is Homoserine kinase from Lactococcus lactis subsp. cremoris (strain SK11).